Reading from the N-terminus, the 730-residue chain is Ribosomal RNA large subunit methyltransferase K/L (730 aa).

Positions 46-157 (TAYRLCLWSR…RGEAILSLDL (112 aa)) constitute a THUMP domain.

It belongs to the methyltransferase superfamily. RlmKL family.

It localises to the cytoplasm. It catalyses the reaction guanosine(2445) in 23S rRNA + S-adenosyl-L-methionine = N(2)-methylguanosine(2445) in 23S rRNA + S-adenosyl-L-homocysteine + H(+). It carries out the reaction guanosine(2069) in 23S rRNA + S-adenosyl-L-methionine = N(2)-methylguanosine(2069) in 23S rRNA + S-adenosyl-L-homocysteine + H(+). Specifically methylates the guanine in position 2445 (m2G2445) and the guanine in position 2069 (m7G2069) of 23S rRNA. The protein is Ribosomal RNA large subunit methyltransferase K/L of Pseudomonas putida (strain W619).